The sequence spans 440 residues: Long-chain alkane monooxygenase (440 aa).

Residues Asp-58, 137 to 138 (SH), Tyr-158, and 227 to 230 (AGMS) each bind FMN.

This sequence belongs to the NtaA/SnaA/DszA monooxygenase family. As to quaternary structure, homodimer.

Its subcellular location is the secreted. The enzyme catalyses a long-chain alkane + FMNH2 + O2 = a long chain fatty alcohol + FMN + H2O + H(+). Functionally, involved in the degradation of long-chain alkanes. Converts alkanes ranging from C(15) to C(36) into their corresponding primary alcohols. In Geobacillus thermodenitrificans (strain NG80-2), this protein is Long-chain alkane monooxygenase.